The sequence spans 81 residues: Protein RADIALIS-like 3 (81 aa).

Residues 7 to 62 (SSSASWTRKENKLFERALATYDQDTPDRWHNVARAVGGKSAEEVRRHYELLIRDVN) enclose the SANT domain.

As to expression, expressed just outside the vascular bundles in the rosette stem and the leaf traces. Not detected in floral primordia.

The protein localises to the nucleus. Functionally, probable transcription factor. The chain is Protein RADIALIS-like 3 (RL3) from Arabidopsis thaliana (Mouse-ear cress).